The primary structure comprises 152 residues: Troponin C (152 aa).

N-acetylthreonine is present on threonine 1. EF-hand domains lie at 9 to 44 (KQIL…LGLL), 45 to 80 (VKDD…KLKE), 82 to 117 (LDER…LGDE), and 118 to 152 (LTEE…SSDA). The Ca(2+) site is built by aspartate 131, aspartate 133, serine 135, threonine 137, and glutamate 142.

The protein belongs to the troponin C family.

In terms of biological role, troponin is the central regulatory protein of striated muscle contraction. Tn consists of three components: Tn-I which is the inhibitor of actomyosin ATPase, Tn-T which contains the binding site for tropomyosin and Tn-C. The binding of calcium to Tn-C abolishes the inhibitory action of Tn on actin filaments. This is Troponin C from Mizuhopecten yessoensis (Japanese scallop).